The following is a 109-amino-acid chain: UPF0154 protein UPA3_0273 (109 aa).

A helical membrane pass occupies residues Val42 to Ile62.

Belongs to the UPF0154 family.

The protein resides in the cell membrane. In Ureaplasma parvum serovar 3 (strain ATCC 27815 / 27 / NCTC 11736), this protein is UPF0154 protein UPA3_0273.